Here is a 538-residue protein sequence, read N- to C-terminus: Bifunctional purine biosynthesis protein PurH (538 aa).

An MGS-like domain is found at 8-158; the sequence is IPAPDKVEIK…KNHAYVTTLT (151 aa).

This sequence belongs to the PurH family.

It carries out the reaction (6R)-10-formyltetrahydrofolate + 5-amino-1-(5-phospho-beta-D-ribosyl)imidazole-4-carboxamide = 5-formamido-1-(5-phospho-D-ribosyl)imidazole-4-carboxamide + (6S)-5,6,7,8-tetrahydrofolate. It catalyses the reaction IMP + H2O = 5-formamido-1-(5-phospho-D-ribosyl)imidazole-4-carboxamide. The protein operates within purine metabolism; IMP biosynthesis via de novo pathway; 5-formamido-1-(5-phospho-D-ribosyl)imidazole-4-carboxamide from 5-amino-1-(5-phospho-D-ribosyl)imidazole-4-carboxamide (10-formyl THF route): step 1/1. It participates in purine metabolism; IMP biosynthesis via de novo pathway; IMP from 5-formamido-1-(5-phospho-D-ribosyl)imidazole-4-carboxamide: step 1/1. This is Bifunctional purine biosynthesis protein PurH from Rhizobium johnstonii (strain DSM 114642 / LMG 32736 / 3841) (Rhizobium leguminosarum bv. viciae).